We begin with the raw amino-acid sequence, 642 residues long: Ribosome biogenesis protein BOP1 homolog (642 aa).

The tract at residues 1 to 28 (MIHKRMNSTELERTSKKIDDYDSSDEED) is disordered. A compositionally biased stretch (basic and acidic residues) spans 10 to 20 (ELERTSKKIDD). WD repeat units follow at residues 311–351 (GHSG…CLKT), 353–393 (SLDG…DRHR), 472–510 (RLKGLMTVLSFHPSEPFLFVGTQRYIRIYDLAKCQLKKK), 513–552 (TGSQWMSCMHVDFRGDNVFVGGHDRVFSWIDLQLSSKPWK), 556–595 (HHTAAIRGVTQHARCPLIATVSDDSTAIVYYARISSDSLK), and 612–642 (KNGLSILAAIFHPSQPWLITAHVDGSIALFT).

This sequence belongs to the WD repeat BOP1/ERB1 family.

It localises to the nucleus. The protein resides in the nucleolus. Its subcellular location is the nucleoplasm. Required for maturation of ribosomal RNAs and formation of the large ribosomal subunit. The protein is Ribosome biogenesis protein BOP1 homolog of Brugia malayi (Filarial nematode worm).